The primary structure comprises 430 residues: Purine nucleoside phosphorylase LACC1 (430 aa).

Position 247 is an N6-acetyllysine (K247). Zn(2+) contacts are provided by H250, C284, and H301.

Belongs to the purine nucleoside phosphorylase YfiH/LACC1 family. Interacts with FASN. Interacts with SDHA. Interacts with ATF6, EIF2AK3 and ERN1. In terms of processing, phosphorylated on tyrosine residues. In terms of tissue distribution, ubiquitously expressed, with higher expression levels in immune-related tissues such as lymph nodes and spleen. Expressed in both intestinal and peripheral myeloid-derived cells.

The protein localises to the cytoplasm. The protein resides in the nucleus. It is found in the endoplasmic reticulum. Its subcellular location is the peroxisome. The enzyme catalyses adenosine + phosphate = alpha-D-ribose 1-phosphate + adenine. The catalysed reaction is inosine + phosphate = alpha-D-ribose 1-phosphate + hypoxanthine. It catalyses the reaction guanosine + phosphate = alpha-D-ribose 1-phosphate + guanine. It carries out the reaction S-methyl-5'-thioadenosine + phosphate = 5-(methylsulfanyl)-alpha-D-ribose 1-phosphate + adenine. The enzyme catalyses adenosine + H2O + H(+) = inosine + NH4(+). Functionally, purine nucleoside enzyme that catalyzes the phosphorolysis of adenosine, guanosine and inosine nucleosides, yielding D-ribose 1-phosphate and the respective free bases, adenine, guanine and hypoxanthine. Also catalyzes the phosphorolysis of S-methyl-5'-thioadenosine into adenine and S-methyl-5-thio-alpha-D-ribose 1-phosphate. Also has adenosine deaminase activity. Acts as a regulator of innate immunity in macrophages by modulating the purine nucleotide metabolism, thereby regulating the metabolic function and bioenergetic state of macrophages. Enables a purine nucleotide cycle between adenosine and inosine monophosphate and adenylosuccinate that prevents cytoplasmic acidification and balances the cytoplasmic-mitochondrial redox interface. The purine nucleotide cycle consumes aspartate and releases fumarate in a manner involving fatty acid oxidation and ATP-citrate lyase activity. Participates in pattern recognition receptor (PRR)-induced cytokines in macrophages: associates with the NOD2-signaling complex and promotes optimal NOD2-induced signaling, cytokine secretion and bacterial clearance. Localizes to the endoplasmic reticulum upon PRR stimulation of macrophages and associates with endoplasmic reticulum-stress sensors, promoting the endoplasmic reticulum unfolded protein response (UPR). Does not show laccase activity. The chain is Purine nucleoside phosphorylase LACC1 from Homo sapiens (Human).